Here is a 293-residue protein sequence, read N- to C-terminus: Alcohol dehydrogenase 1 (293 aa).

Positions 26, 29, 32, 40, and 104 each coordinate Zn(2+). NAD(+) is bound by residues 129–134 (GLGAVG), Asp153, Arg158, Thr199, Val222, 222–224 (VGV), and Phe249.

It belongs to the zinc-containing alcohol dehydrogenase family. In terms of assembly, homodimer. It depends on Zn(2+) as a cofactor.

The protein resides in the cytoplasm. It catalyses the reaction a primary alcohol + NAD(+) = an aldehyde + NADH + H(+). It carries out the reaction a secondary alcohol + NAD(+) = a ketone + NADH + H(+). This chain is Alcohol dehydrogenase 1 (ADH1), found in Zea luxurians (Guatemalan teosinte).